A 286-amino-acid polypeptide reads, in one-letter code: Aminoglycoside N(3)-acetyltransferase III (286 aa).

This sequence belongs to the antibiotic N-acetyltransferase family.

It carries out the reaction a 2-deoxystreptamine antibiotic + acetyl-CoA = an N(3)-acetyl-2-deoxystreptamine antibiotic + CoA + H(+). Functionally, resistance to antibiotics containing the 2-deoxy-streptamine ring including gentamicin, kanamycin, tobramycin, neomycin and apramycin. The protein is Aminoglycoside N(3)-acetyltransferase III (aacC3) of Salmonella sp.